Here is a 235-residue protein sequence, read N- to C-terminus: Caveolin-1 (235 aa).

Over 1–161 (MSTEQDIKTE…LVSLLALPFT (161 aa)) the chain is Cytoplasmic. The segment at 29-72 (GEAVVAPEEPKPKKNWFTFGKKKAAPTDETNIEEGGAPGDEPVK) is disordered. The segment at residues 162–182 (IIFAIFFGLLASINVFIIVPL) is an intramembrane region (helical). Over 183-235 (GKLLSIPGTLLAKLWNWLIHAIFDPIASAVGLIFSNFNIRKYGINQETTAPCV) the chain is Cytoplasmic. A lipid anchor (S-palmitoyl cysteine) is attached at C234.

Belongs to the caveolin family. Homooligomer containing 14-16 monomers per oligomer.

Its subcellular location is the golgi apparatus membrane. The protein localises to the cell membrane. It is found in the membrane. The protein resides in the caveola. In terms of biological role, may act as a scaffolding protein within caveolar membranes. Interacts directly with G-protein alpha subunits and can functionally regulate their activity. This Caenorhabditis elegans protein is Caveolin-1 (cav-1).